A 1284-amino-acid polypeptide reads, in one-letter code: ABC multidrug transporter atrC (1284 aa).

The segment covering 1-11 (MKSTAESKETP) has biased composition (basic and acidic residues). The tract at residues 1–24 (MKSTAESKETPSQDESTTSVPCTE) is disordered. The next 6 membrane-spanning stretches (helical) occupy residues 55–75 (AVAI…NLIF), 99–119 (AAEL…LSYT), 178–198 (IGLL…RLWC), 203–223 (TLIC…VAAV), 282–302 (LLGL…GLAF), and 320–340 (IFTV…LAPY). The region spanning 55 to 346 (AVAILAACAS…LAPYSIEFSR (292 aa)) is the ABC transmembrane type-1 1 domain. Positions 381–626 (VELENVTFSY…DGVYAGLVKI (246 aa)) constitute an ABC transporter 1 domain. Asn-385 and Asn-401 each carry an N-linked (GlcNAc...) asparagine glycan. An ATP-binding site is contributed by 416 to 423 (GQSGSGKS). 2 N-linked (GlcNAc...) asparagine glycosylation sites follow: Asn-488 and Asn-632. Transmembrane regions (helical) follow at residues 705 to 725 (LVVL…AILM) and 745 to 765 (FYAS…LAVG). Positions 705 to 992 (LVVLLGCLGG…LFQWSTSITK (288 aa)) constitute an ABC transmembrane type-1 2 domain. N-linked (GlcNAc...) asparagine glycosylation is present at Asn-800. The next 4 helical transmembrane spans lie at 824–844 (IALV…AIAF), 846–866 (WKLG…AGMV), 931–951 (MICF…GFWY), and 955–975 (LVSL…SVFF). The N-linked (GlcNAc...) asparagine glycan is linked to Asn-995. The ABC transporter 2 domain maps to 1027–1280 (IAMDNVRFSY…GGLYRRMCEA (254 aa)). 1062-1069 (GSSGCGKS) is an ATP binding site. Asn-1122 is a glycosylation site (N-linked (GlcNAc...) asparagine).

Belongs to the ABC transporter superfamily. ABCB family. Multidrug resistance exporter (TC 3.A.1.201) subfamily.

The protein resides in the cell membrane. In terms of biological role, pleiotropic ABC efflux transporter involved in the protection of the cells against a wide range of toxic compounds. This is ABC multidrug transporter atrC from Emericella nidulans (Aspergillus nidulans).